A 347-amino-acid chain; its full sequence is Bifunctional dihydroflavonol 4-reductase/flavanone 4-reductase (347 aa).

Lys-44 and Tyr-163 together coordinate NADP(+).

The protein belongs to the NAD(P)-dependent epimerase/dehydratase family. Dihydroflavonol-4-reductase subfamily.

It carries out the reaction a (2R,3S,4S)-leucoanthocyanidin + NADP(+) = a (2R,3R)-dihydroflavonol + NADPH + H(+). It catalyses the reaction (2S)-flavan-4-ol + NADP(+) = (2S)-flavanone + NADPH + H(+). Bifunctional enzyme involved in the flavonoid metabolism. May use dihydroquercetin, eriodictyol, garbanzol (5-deoxydihydrokaempferol), dihydrofisetin (5-deoxydihydroquercetin), dihydrokaempferol to a low extent (5%), but not naringenin, 5-deoxynaringenin or butin (5-deoxyeriodictyol) as substrate. The sequence is that of Bifunctional dihydroflavonol 4-reductase/flavanone 4-reductase (DFR) from Pyrus communis (Pear).